A 401-amino-acid chain; its full sequence is Type 3 secretion system translocon protein SctE (401 aa).

A coiled-coil region spans residues 129-160; sequence IQRLHEQNMKKIEENQEKIKETEENAKQVKKS. 2 helical membrane-spanning segments follow: residues 176 to 196 and 224 to 244; these read VIVG…AMMV and ILGP…TVMT. The stretch at 345 to 379 forms a coiled coil; sequence LALNKADMAALQSIIDRLKEELSHLSESHQQVMEL.

Belongs to the SctE/SipB/YopB family. The core secretion machinery of the T3SS is composed of approximately 20 different proteins, including cytoplasmic components, a base, an export apparatus and a needle. This subunit is involved in the formation of a pore, called the translocon, in host membrane. Interacts with YopD/SctB. Together with YopD/SctB, forms a multimeric integral membrane complex.

The protein resides in the secreted. It localises to the host membrane. Its function is as follows. Component of the type III secretion system (T3SS), also called injectisome, which is used to inject bacterial effector proteins into eukaryotic host cells. YopB/SctE and YopD/SctB are inserted into the host membrane where they form a pore and allow the translocation of effector proteins into the cytosol of target cells. Is an essential virulence determinant. Required for YopE and YopH translocation. Shows membrane disruptive activity in vitro. In terms of biological role, interaction with the host cell triggers a signaling response, via activation of the small GTPase Ras, the MAPK kinases ERK and JNK and the nuclear factor NF-kappa-B pathways, and production of the proinflammatory cytokine interleukin-8 (IL-8). YopB/SctE-dependent signaling response is counteracted by YopE, YopH and YopJ in infected host cells. YopB/SctE is directly responsible for signaling and its insertion in the membrane is important to activate the signaling response in the host cell. The protein is Type 3 secretion system translocon protein SctE of Yersinia pseudotuberculosis serotype I (strain IP32953).